The chain runs to 153 residues: NADPH-dependent 7-cyano-7-deazaguanine reductase (153 aa).

The interval 1–22 is disordered; it reads MTDNRYDNLGQLGTSTPLPDNP. Catalysis depends on cysteine 51, which acts as the Thioimide intermediate. Catalysis depends on aspartate 58, which acts as the Proton donor. Substrate contacts are provided by residues 73-75 and 92-93; these read VES and HE.

Belongs to the GTP cyclohydrolase I family. QueF type 1 subfamily.

The protein localises to the cytoplasm. It catalyses the reaction 7-aminomethyl-7-carbaguanine + 2 NADP(+) = 7-cyano-7-deazaguanine + 2 NADPH + 3 H(+). It functions in the pathway tRNA modification; tRNA-queuosine biosynthesis. Its function is as follows. Catalyzes the NADPH-dependent reduction of 7-cyano-7-deazaguanine (preQ0) to 7-aminomethyl-7-deazaguanine (preQ1). The sequence is that of NADPH-dependent 7-cyano-7-deazaguanine reductase from Maricaulis maris (strain MCS10) (Caulobacter maris).